A 255-amino-acid polypeptide reads, in one-letter code: MIPVERRQIILEMVAEKGIVSIAELTDRMNVSHMTIRRDLQKLEQQGAVVLVSGGVQSPGRVAHEPSHQVKTALAMTQKAAIGKLAASLVQPGSCIYLDAGTTTLAIAQHLIHMESLTVVTNDFVIADYLLDNSNCTIIHTGGAVCRENRSCVGEAAATMLRSLMIDQAFISASSWSVRGISTPAEDKVTVKRAIASASRQRVLVCDATKYGQVATWLALPLSEFDQIITDDGLPESASRALVKQDLSLLVAKNE.

In terms of domain architecture, HTH deoR-type spans 3 to 58 (PVERRQIILEMVAEKGIVSIAELTDRMNVSHMTIRRDLQKLEQQGAVVLVSGGVQS). The H-T-H motif DNA-binding region spans 20 to 39 (VSIAELTDRMNVSHMTIRRD).

This is an uncharacterized protein from Escherichia coli (strain K12).